Consider the following 2389-residue polypeptide: Highly reducing polyketide synthase Dhc3 (2389 aa).

One can recognise a Ketosynthase family 3 (KS3) domain in the interval 9–433 (DVPIAVVGLA…GTNGHAVLES (425 aa)). Active-site for beta-ketoacyl synthase activity residues include Cys181, His316, and His356. The malonyl-CoA:ACP transacylase (MAT) domain stretch occupies residues 551–861 (FVFTGQGAQW…LSGPVEQILN (311 aa)). Ser641 serves as the catalytic For malonyltransferase activity. An N-terminal hotdog fold region spans residues 944–1079 (RSLIGAQVPM…GLITIDYADT (136 aa)). Residues 944–1263 (RSLIGAQVPM…VSELENDTEA (320 aa)) form the PKS/mFAS DH domain. A dehydratase (DH) domain region spans residues 946–1262 (LIGAQVPMMD…RVSELENDTE (317 aa)). His976 (proton acceptor; for dehydratase activity) is an active-site residue. A C-terminal hotdog fold region spans residues 1107-1263 (PDICSKEDFY…VSELENDTEA (157 aa)). Asp1173 acts as the Proton donor; for dehydratase activity in catalysis. Positions 1673–1987 (GLLDTLAFIE…QGKHRGKLVL (315 aa)) are enoylreductase (ER) domain. The interval 2011–2191 (ATYLFVGGLG…VAVDLGIMRD (181 aa)) is catalytic ketoreductase (KRc) domain. The 78-residue stretch at 2302–2379 (EAVSIITDAL…EFAEKIAEKS (78 aa)) folds into the Carrier domain. Ser2339 carries the post-translational modification O-(pantetheine 4'-phosphoryl)serine.

It participates in mycotoxin biosynthesis. Highly reducing polyketide synthase; part of the gene cluster that mediates the biosynthesis of 10,11-dehydrocurvularin, a prevalent fungal phytotoxin with heat shock response and immune-modulatory activities. The highly reducing polyketide synthase Dhc3 is responsible for biosynthesis up to the tetraketide stage. The non-reducing polyketide synthase Dhc5 then conducts four additional chain extension cycles, producing the unreduced part of the nascent octaketide from C-1 to C-8 in 10,11-dehydrocurvularin. The polypeptide is Highly reducing polyketide synthase Dhc3 (Dhc3) (Alternaria cinerariae).